The sequence spans 938 residues: Isoleucine--tRNA ligase (938 aa).

The 'HIGH' region signature appears at proline 58–histidine 68. Residue glutamate 566 participates in L-isoleucyl-5'-AMP binding. The 'KMSKS' region motif lies at lysine 607–serine 611. An ATP-binding site is contributed by lysine 610. 4 residues coordinate Zn(2+): cysteine 906, cysteine 909, cysteine 926, and cysteine 929.

Belongs to the class-I aminoacyl-tRNA synthetase family. IleS type 1 subfamily. In terms of assembly, monomer. The cofactor is Zn(2+).

Its subcellular location is the cytoplasm. The catalysed reaction is tRNA(Ile) + L-isoleucine + ATP = L-isoleucyl-tRNA(Ile) + AMP + diphosphate. Its function is as follows. Catalyzes the attachment of isoleucine to tRNA(Ile). As IleRS can inadvertently accommodate and process structurally similar amino acids such as valine, to avoid such errors it has two additional distinct tRNA(Ile)-dependent editing activities. One activity is designated as 'pretransfer' editing and involves the hydrolysis of activated Val-AMP. The other activity is designated 'posttransfer' editing and involves deacylation of mischarged Val-tRNA(Ile). This Desulfovibrio desulfuricans (strain ATCC 27774 / DSM 6949 / MB) protein is Isoleucine--tRNA ligase.